Consider the following 363-residue polypeptide: Chorismate synthase (363 aa).

The NADP(+) site is built by R48 and R54. FMN is bound by residues 131-133 (RSS), 244-245 (NA), G288, 303-307 (KPTSS), and R329.

Belongs to the chorismate synthase family. Homotetramer. It depends on FMNH2 as a cofactor.

It catalyses the reaction 5-O-(1-carboxyvinyl)-3-phosphoshikimate = chorismate + phosphate. It functions in the pathway metabolic intermediate biosynthesis; chorismate biosynthesis; chorismate from D-erythrose 4-phosphate and phosphoenolpyruvate: step 7/7. In terms of biological role, catalyzes the anti-1,4-elimination of the C-3 phosphate and the C-6 proR hydrogen from 5-enolpyruvylshikimate-3-phosphate (EPSP) to yield chorismate, which is the branch point compound that serves as the starting substrate for the three terminal pathways of aromatic amino acid biosynthesis. This reaction introduces a second double bond into the aromatic ring system. This Hyphomonas neptunium (strain ATCC 15444) protein is Chorismate synthase.